The primary structure comprises 225 residues: THAP domain-containing protein 1 A (225 aa).

A THAP-type zinc finger spans residues 5–57 (CSAYGCKNRYDKDKPISFHKFPLKRPLLCKKWEAAVRRAEFKPTKYSSICSDH). A coiled-coil region spans residues 139 to 194 (VEDTVHQRRRIQQLEEQVDKLRKKLKIANQKCRRQERSLEKLEREVSEYREAKGSG).

Belongs to the THAP1 family.

It is found in the nucleus. The protein localises to the nucleoplasm. Its function is as follows. DNA-binding transcription regulator that regulates endothelial cell proliferation and G1/S cell-cycle progression. Specifically binds the 5'-[AT]NTNN[GT]GGCA[AGT]-3' core DNA sequence and acts by modulating expression of pRB-E2F cell-cycle target genes. The chain is THAP domain-containing protein 1 A (thap1-a) from Xenopus laevis (African clawed frog).